We begin with the raw amino-acid sequence, 237 residues long: MNKYEIIANEMRNRIKNNVYPIDQPIPDEVSLAKEFNSSRMTMKRALDNLVAEGLLFRKRGHGTFIIQSAIQDDHVHVVSNEILGLTNLLKDKKIKSKVIQFEVQFPTEEVAAHLSIDQKTPVYYVVRLRIVEGEPYVLEKTYMPTHLIPGINDDVLHDSIYNHITNVLQLKIAGTHRKIRACKSDHIDQQHLGCKQDDPILEVEHVGFLDTGIPFEYSFSRHRHDKFVVTSVNIRR.

Positions 1-69 (MNKYEIIANE…RGHGTFIIQS (69 aa)) constitute an HTH gntR-type domain. Positions 29 to 48 (EVSLAKEFNSSRMTMKRALD) form a DNA-binding region, H-T-H motif.

The protein localises to the cytoplasm. In terms of biological role, transcriptional repressor of the gmuBACDREFG operon which is involved in the uptake and degradation of glucomannan. The polypeptide is HTH-type transcriptional regulator GmuR (gmuR) (Bacillus subtilis (strain 168)).